The following is a 420-amino-acid chain: Aminoacyltransferase FemA (420 aa).

This sequence belongs to the FemABX family. As to quaternary structure, homodimer. Interacts with FemB.

It is found in the cytoplasm. It catalyses the reaction beta-D-GlcNAc-(1-&gt;4)-Mur2Ac(oyl-L-Ala-D-isoglutaminyl-L-Lys-(N(6)-Gly)-D-Ala-D-Ala)-di-trans,octa-cis-undecaprenyl diphosphate + 2 glycyl-tRNA(Gly) = MurNAc-L-Ala-D-isoglutaminyl-L-Lys-(N(6)-tri-Gly)-D-Ala-D-Ala-diphospho-di-trans,octa-cis-undecaprenyl-GlcNAc + 2 tRNA(Gly) + 2 H(+). In terms of biological role, catalyzes the formation of the pentaglycine interpeptide bridge, which is characteristic of the S.aureus peptidoglycan. Adds glycines 2 and 3 of the pentaglycine bridge, using glycyl-tRNA(Gly) as donor. Involved in resistance to methicillin. The chain is Aminoacyltransferase FemA (femA) from Staphylococcus aureus (strain NCTC 8325 / PS 47).